The primary structure comprises 876 residues: Serrate RNA effector molecule homolog (876 aa).

The tract at residues 1-90 (MGDSDDEYDR…RRDWDEHSSD (90 aa)) is disordered. Gly2 carries the post-translational modification N-acetylglycine. Ser4 is modified (phosphoserine). Tyr8 carries the phosphotyrosine modification. The segment covering 8–73 (YDRRRRDKFR…ERFSPPRHEL (66 aa)) has biased composition (basic and acidic residues). Phosphoserine occurs at positions 67, 74, and 136. Lys150 is covalently cross-linked (Glycyl lysine isopeptide (Lys-Gly) (interchain with G-Cter in SUMO2)). Residues 272-413 (EEEEQAGKPG…PKDAPGLECK (142 aa)) are disordered. Residues 297 to 347 (DGERKANEKDDKKEDGKQAENESSSDDKIKKSEGDGDKEEKKEDSEKEAKK) are compositionally biased toward basic and acidic residues. Residues 370 to 387 (SESESESGQAEEEKEEAD) show a composition bias toward acidic residues. Over residues 388 to 413 (ETLKEKEKPKEEEREKPKDAPGLECK) the composition is skewed to basic and acidic residues. A Phosphoserine modification is found at Ser493. Residue Thr544 is modified to Phosphothreonine. Position 570 is a phosphoserine (Ser570). Residues 575–597 (ELLGSSGGAPPEEPPKEGNPAEI) form a disordered region. Thr671 bears the Phosphothreonine mark. At Ser679 the chain carries Phosphoserine. An omega-N-methylarginine mark is found at Arg833, Arg840, and Arg850. The interval 835–854 (NYDAFRGQGGYPGKPRNRMV) is disordered.

It belongs to the ARS2 family. In terms of assembly, interacts with CASP8AP2, ERBB4, NCBP1/CBP80 and DROSHA. Interacts with LUZP4. Interacts with NCBP2/CBP20 and NCBP3. Interacts with MTREX.

Its subcellular location is the nucleus. The protein localises to the nucleoplasm. It localises to the cytoplasm. Acts as a mediator between the cap-binding complex (CBC) and the primary microRNAs (miRNAs) processing machinery during cell proliferation. Contributes to the stability and delivery of capped primary miRNA transcripts to the primary miRNA processing complex containing DGCR8 and DROSHA, thereby playing a role in RNA-mediated gene silencing (RNAi) by miRNAs. Binds capped RNAs (m7GpppG-capped RNA); however interaction is probably mediated via its interaction with NCBP1/CBP80 component of the CBC complex. Involved in cell cycle progression at S phase. Does not directly confer arsenite resistance but rather modulates arsenic sensitivity. Independently of its activity on miRNAs, necessary and sufficient to promote neural stem cell self-renewal. Does so by directly binding SOX2 promoter and positively regulating its transcription. This is Serrate RNA effector molecule homolog (SRRT) from Bos taurus (Bovine).